The chain runs to 321 residues: GDP-L-fucose synthase (321 aa).

14-20 (GGSGLVG) is a binding site for NADP(+). The active-site Proton donor/acceptor is Y143. Residues K147, 170–173 (PTNV), and H186 contribute to the NADP(+) site. The substrate site is built by K194, W208, R215, and D277.

The protein belongs to the NAD(P)-dependent epimerase/dehydratase family. Fucose synthase subfamily. Homodimer.

It catalyses the reaction GDP-beta-L-fucose + NADP(+) = GDP-4-dehydro-alpha-D-rhamnose + NADPH + H(+). Its pathway is nucleotide-sugar biosynthesis; GDP-L-fucose biosynthesis via de novo pathway; GDP-L-fucose from GDP-alpha-D-mannose: step 2/2. Its function is as follows. Catalyzes the two-step NADP-dependent conversion of GDP-4-dehydro-6-deoxy-D-mannose to GDP-fucose, involving an epimerase and a reductase reaction. This chain is GDP-L-fucose synthase, found in Homo sapiens (Human).